The primary structure comprises 607 residues: ATP-dependent zinc metalloprotease FtsH 2 (607 aa).

Residues 1–2 (MR) are Cytoplasmic-facing. Residues 3–23 (SLWIVLVLVLGSALLLQVMAA) traverse the membrane as a helical segment. Over 24–99 (SDDRIPYARF…PYTRVADELG (76 aa)) the chain is Periplasmic. The helical transmembrane segment at 100–120 (LPPYLWLLLPLAGLAAMGHLA) threads the bilayer. Residues 121-607 (SRRATTAGTI…LREMVASGEA (487 aa)) lie on the Cytoplasmic side of the membrane. An ATP-binding site is contributed by 195 to 202 (GPPGTGKT). Residue H418 participates in Zn(2+) binding. The active site involves E419. Zn(2+) is bound by residues H422 and D495.

This sequence in the central section; belongs to the AAA ATPase family. It in the C-terminal section; belongs to the peptidase M41 family. Homohexamer. It depends on Zn(2+) as a cofactor.

Its subcellular location is the cell inner membrane. Its function is as follows. Acts as a processive, ATP-dependent zinc metallopeptidase for both cytoplasmic and membrane proteins. Plays a role in the quality control of integral membrane proteins. This is ATP-dependent zinc metalloprotease FtsH 2 from Sorangium cellulosum (strain So ce56) (Polyangium cellulosum (strain So ce56)).